The sequence spans 318 residues: Nisin-resistance protein (318 aa).

A helical transmembrane segment spans residues 7–28 (ILLGLVAVCALFLGIIYLWGYK).

The protein localises to the cell membrane. The polypeptide is Nisin-resistance protein (nsr) (Lactococcus lactis subsp. lactis (Streptococcus lactis)).